The following is a 226-amino-acid chain: Gap junction beta-2 protein (226 aa).

The stretch at 2–13 (DWGALQTILGGV) is an intramembrane region. The Cytoplasmic portion of the chain corresponds to 14 to 20 (NKYSTSI). The chain crosses the membrane as a helical span at residues 21–40 (GKIWLTVLFIFRIMILVVAA). The Extracellular portion of the chain corresponds to 41–73 (KEVWGDEQADFVCNTLQPGCKNVCYDHYFPISH). 3 residues coordinate Ca(2+): Glu-42, Gly-45, and Glu-47. Cystine bridges form between Cys-53-Cys-180, Cys-60-Cys-174, and Cys-64-Cys-169. Residues 74-94 (IRLWALQLIFVSTPALLVAMH) form a helical membrane-spanning segment. Topologically, residues 95-135 (VAYRRHEKKRKFIKGEIKNEFKDIEEIKTQKVRIEGSLWWT) are cytoplasmic. A helical transmembrane segment spans residues 136 to 156 (YTSSIFFRVVFEAAFMYVFYV). At 157–189 (MYDGFSMQRLVKCNAWPCPNTVDCFVSRPTEKT) the chain is on the extracellular side. Residues 190-210 (VFTVFMIAVSGICILLNVTEL) traverse the membrane as a helical segment. At 211-226 (CYLLIRYCSGKSKKPV) the chain is on the cytoplasmic side.

The protein belongs to the connexin family. Beta-type (group I) subfamily. A hemichannel or connexon is composed of a hexamer of connexins. A functional gap junction is formed by the apposition of two hemichannels. Forms heteromeric channels with GJB4. Interacts with CNST.

Its subcellular location is the cell membrane. It is found in the cell junction. The protein localises to the gap junction. Its function is as follows. Structural component of gap junctions. Gap junctions are dodecameric channels that connect the cytoplasm of adjoining cells. They are formed by the docking of two hexameric hemichannels, one from each cell membrane. Small molecules and ions diffuse from one cell to a neighboring cell via the central pore. This Macaca mulatta (Rhesus macaque) protein is Gap junction beta-2 protein (GJB2).